Consider the following 340-residue polypeptide: Agmatinase, mitochondrial (340 aa).

H150, D173, H175, D177, D264, and D266 together coordinate Mn(2+).

It belongs to the arginase family. Agmatinase subfamily. The cofactor is Mn(2+).

The protein localises to the mitochondrion. It carries out the reaction agmatine + H2O = urea + putrescine. It functions in the pathway amine and polyamine biosynthesis; putrescine biosynthesis via agmatine pathway; putrescine from agmatine: step 1/1. In Gallus gallus (Chicken), this protein is Agmatinase, mitochondrial (AGMAT).